A 363-amino-acid chain; its full sequence is Tetraacyldisaccharide 4'-kinase (363 aa).

ATP is bound at residue 78-85; it reads TVGGNGKT.

Belongs to the LpxK family.

It catalyses the reaction a lipid A disaccharide + ATP = a lipid IVA + ADP + H(+). It participates in glycolipid biosynthesis; lipid IV(A) biosynthesis; lipid IV(A) from (3R)-3-hydroxytetradecanoyl-[acyl-carrier-protein] and UDP-N-acetyl-alpha-D-glucosamine: step 6/6. Functionally, transfers the gamma-phosphate of ATP to the 4'-position of a tetraacyldisaccharide 1-phosphate intermediate (termed DS-1-P) to form tetraacyldisaccharide 1,4'-bis-phosphate (lipid IVA). In Wigglesworthia glossinidia brevipalpis, this protein is Tetraacyldisaccharide 4'-kinase.